The primary structure comprises 66 residues: Large ribosomal subunit protein bL32 (66 aa).

Belongs to the bacterial ribosomal protein bL32 family.

This is Large ribosomal subunit protein bL32 from Rickettsia canadensis (strain McKiel).